The following is a 495-amino-acid chain: 3-octaprenyl-4-hydroxybenzoate carboxy-lyase (495 aa).

A Mn(2+)-binding site is contributed by Asn172. Prenylated FMN-binding positions include 175–177 (IYR), 189–191 (RWL), and 194–195 (RG). Glu238 lines the Mn(2+) pocket. Asp287 (proton donor) is an active-site residue.

Belongs to the UbiD family. In terms of assembly, homohexamer. Prenylated FMN is required as a cofactor. Mn(2+) serves as cofactor.

Its subcellular location is the cell membrane. The enzyme catalyses a 4-hydroxy-3-(all-trans-polyprenyl)benzoate + H(+) = a 2-(all-trans-polyprenyl)phenol + CO2. Its pathway is cofactor biosynthesis; ubiquinone biosynthesis. Functionally, catalyzes the decarboxylation of 3-octaprenyl-4-hydroxy benzoate to 2-octaprenylphenol, an intermediate step in ubiquinone biosynthesis. The protein is 3-octaprenyl-4-hydroxybenzoate carboxy-lyase of Yersinia pseudotuberculosis serotype O:1b (strain IP 31758).